The sequence spans 491 residues: Proline--tRNA ligase (491 aa).

It belongs to the class-II aminoacyl-tRNA synthetase family. ProS type 3 subfamily. In terms of assembly, homodimer.

It is found in the cytoplasm. The catalysed reaction is tRNA(Pro) + L-proline + ATP = L-prolyl-tRNA(Pro) + AMP + diphosphate. Functionally, catalyzes the attachment of proline to tRNA(Pro) in a two-step reaction: proline is first activated by ATP to form Pro-AMP and then transferred to the acceptor end of tRNA(Pro). The polypeptide is Proline--tRNA ligase (Halorubrum lacusprofundi (strain ATCC 49239 / DSM 5036 / JCM 8891 / ACAM 34)).